The primary structure comprises 85 residues: Beta-toxin Ct6 (85 aa).

A signal peptide spans 1-18; sequence MKTFVLALCLVLIGMVYA. Positions 19-84 constitute an LCN-type CS-alpha/beta domain; that stretch reads KDGYLVSKHT…VYPLPNKSCG (66 aa). Cystine bridges form between C30-C83, C34-C59, C43-C64, and C47-C66. At C83 the chain carries Cysteine amide.

The protein belongs to the long (4 C-C) scorpion toxin superfamily. Sodium channel inhibitor family. Beta subfamily. In terms of tissue distribution, expressed by the venom gland.

It is found in the secreted. Beta toxins bind voltage-independently at site-4 of sodium channels (Nav) and shift the voltage of activation toward more negative potentials thereby affecting sodium channel activation and promoting spontaneous and repetitive firing. The polypeptide is Beta-toxin Ct6 (Centruroides tecomanus (Scorpion)).